The following is a 450-amino-acid chain: Benzene 1,2-dioxygenase subunit alpha (450 aa).

The Rieske domain occupies 56 to 163 (LLGHETHIRK…VETYKGLIFA (108 aa)). Cys-96, His-98, Cys-116, and His-119 together coordinate [2Fe-2S] cluster. Fe cation contacts are provided by His-222 and His-228.

This sequence belongs to the bacterial ring-hydroxylating dioxygenase alpha subunit family. In terms of assembly, this dioxygenase system consists of four proteins: the two subunits of the hydroxylase component (BedC1 and BedC2), a ferredoxin (BedB) and a ferredoxin reductase (BedA). [2Fe-2S] cluster serves as cofactor. Fe cation is required as a cofactor.

It catalyses the reaction benzene + NADH + O2 + H(+) = cis-1,2-dihydrobenzene-1,2-diol + NAD(+). The protein operates within aromatic compound metabolism; benzene degradation; catechol from benzene: step 1/2. This chain is Benzene 1,2-dioxygenase subunit alpha (bedC1), found in Pseudomonas putida (Arthrobacter siderocapsulatus).